A 279-amino-acid polypeptide reads, in one-letter code: MTFWNEIYAHFDPVAFSIFGLKVHWYGLMYVLALLVALYMAKFFVKKDRLKFSNQVLENYFIWVEIGVILGARFGYILIYSNAQIFYLTHPWEIFNPFYNGKFVGISGMSYHGAVIGFIIATILFCRKKRQNLWSLLDLCALSIPLGYFFGRIGNFLNQELFGRITDVSWGILVNGELRHPSQLYEACLEGITIFLILYFYRKYKKFDGELICVYVILYAIFRFLTEFLREADVQIGYFSFGLSLGQILSVFMLILGFSAYIKLLKNSQTEQKFNQNKS.

7 helical membrane-spanning segments follow: residues 25–45 (WYGL…KFFV), 60–80 (YFIW…ILIY), 103–123 (FVGI…IATI), 133–153 (LWSL…FGRI), 181–201 (PSQL…LYFY), 209–229 (GELI…TEFL), and 236–256 (IGYF…MLIL). Residue Arg152 coordinates a 1,2-diacyl-sn-glycero-3-phospho-(1'-sn-glycerol).

It belongs to the Lgt family.

It is found in the cell inner membrane. It catalyses the reaction L-cysteinyl-[prolipoprotein] + a 1,2-diacyl-sn-glycero-3-phospho-(1'-sn-glycerol) = an S-1,2-diacyl-sn-glyceryl-L-cysteinyl-[prolipoprotein] + sn-glycerol 1-phosphate + H(+). It functions in the pathway protein modification; lipoprotein biosynthesis (diacylglyceryl transfer). In terms of biological role, catalyzes the transfer of the diacylglyceryl group from phosphatidylglycerol to the sulfhydryl group of the N-terminal cysteine of a prolipoprotein, the first step in the formation of mature lipoproteins. This chain is Phosphatidylglycerol--prolipoprotein diacylglyceryl transferase, found in Campylobacter hominis (strain ATCC BAA-381 / DSM 21671 / CCUG 45161 / LMG 19568 / NCTC 13146 / CH001A).